A 207-amino-acid polypeptide reads, in one-letter code: MLEVKNLTAIRDERILFESLSFEIHAGELVQIEGRNGTGKTTLLRIIAGLGECECGEILWQRSKIQSDRESYHQDLLFLGHQTGIKRELTALENLRFYLAVHQQTVDDPAIFEALAKVGLAGREDVPVAQLSAGQQRRVALARLWLSKKPLWILDEPLTAIDKQGVSVLEALFLSHAQQGGIVILTTHQDMFADNPKLRKIRLGDPK.

The region spanning 2-204 is the ABC transporter domain; it reads LEVKNLTAIR…NPKLRKIRLG (203 aa). ATP is bound at residue 34–41; sequence GRNGTGKT.

The protein belongs to the ABC transporter superfamily. CcmA exporter (TC 3.A.1.107) family. The complex is composed of two ATP-binding proteins (CcmA) and two transmembrane proteins (CcmB).

It localises to the cell inner membrane. It catalyses the reaction heme b(in) + ATP + H2O = heme b(out) + ADP + phosphate + H(+). Its function is as follows. Part of the ABC transporter complex CcmAB involved in the biogenesis of c-type cytochromes; once thought to export heme, this seems not to be the case, but its exact role is uncertain. Responsible for energy coupling to the transport system. The protein is Cytochrome c biogenesis ATP-binding export protein CcmA of Vibrio cholerae serotype O1 (strain ATCC 39315 / El Tor Inaba N16961).